Reading from the N-terminus, the 179-residue chain is Adenine phosphoribosyltransferase (179 aa).

This sequence belongs to the purine/pyrimidine phosphoribosyltransferase family. Homodimer.

It is found in the cytoplasm. The catalysed reaction is AMP + diphosphate = 5-phospho-alpha-D-ribose 1-diphosphate + adenine. It functions in the pathway purine metabolism; AMP biosynthesis via salvage pathway; AMP from adenine: step 1/1. In terms of biological role, catalyzes a salvage reaction resulting in the formation of AMP, that is energically less costly than de novo synthesis. This Helicobacter pylori (strain ATCC 700392 / 26695) (Campylobacter pylori) protein is Adenine phosphoribosyltransferase.